Reading from the N-terminus, the 139-residue chain is Ribonuclease homolog (139 aa).

The first 23 residues, Met1–Gly23, serve as a signal peptide directing secretion. The active-site Proton acceptor is His34. 3 cysteine pairs are disulfide-bonded: Cys49–Cys102, Cys64–Cys111, and Cys82–Cys126. Lys65–Thr69 lines the substrate pocket. His133 functions as the Proton donor in the catalytic mechanism.

Belongs to the pancreatic ribonuclease family.

Its subcellular location is the secreted. The protein is Ribonuclease homolog of Gallus gallus (Chicken).